Here is a 470-residue protein sequence, read N- to C-terminus: Argininosuccinate lyase (470 aa).

This sequence belongs to the lyase 1 family. Argininosuccinate lyase subfamily.

It localises to the cytoplasm. It carries out the reaction 2-(N(omega)-L-arginino)succinate = fumarate + L-arginine. The protein operates within amino-acid biosynthesis; L-arginine biosynthesis; L-arginine from L-ornithine and carbamoyl phosphate: step 3/3. The chain is Argininosuccinate lyase from Mycolicibacterium gilvum (strain PYR-GCK) (Mycobacterium gilvum (strain PYR-GCK)).